The following is a 535-amino-acid chain: MEEGARHRNNTEKKHPGGGESDASPEAGSGGGGVALKKEIGLVSACGIIVGNIIGSGIFVSPKGVLENAGSVGLALIVWIVTGFITVVGALCYAELGVTIPKSGGDYSYVKDIFGGLAGFLRLWIAVLVIYPTNQAVIALTFSNYVLQPLFPTCFPPESGLRLLAAICLLLLTWVNCSSVRWATRVQDIFTAGKLLALALIIIMGIVQICKGEYFWLEPKNAFENFQEPDIGLVALAFLQGSFAYGGWNFLNYVTEELVDPYKNLPRAIFISIPLVTFVYVFANVAYVTAMSPQELLASNAVAVTFGEKLLGVMAWIMPISVALSTFGGVNGSLFTSSRLFFAGAREGHLPSVLAMIHVKRCTPIPALLFTCISTLLMLVTSDMYTLINYVGFINYLFYGVTVAGQIVLRWKKPDIPRPIKINLLFPIIYLLFWAFLLVFSLWSEPVVCGIGLAIMLTGVPVYFLGVYWQHKPKCFSDFIELLTLVSQKMCVVVYPEVERGSGTEEANEDMEEQQQPMYQPTPTKDKDVAGQPQP.

The span at M1–G17 shows a compositional bias: basic and acidic residues. Positions M1–G30 are disordered. Residues M1–S44 lie on the Cytoplasmic side of the membrane. A Phosphoserine modification is found at S29. Residues A45 to V65 traverse the membrane as a helical segment. I53 provides a ligand contact to L-leucine. Over L66–G73 the chain is Extracellular. A helical transmembrane segment spans residues L74 to E95. Topologically, residues L96–G116 are cytoplasmic. Residues L117–P149 traverse the membrane as a helical segment. An L-tryptophan-binding site is contributed by N134. At L150 to P157 the chain is on the extracellular side. Residues E158–S178 traverse the membrane as a helical segment. Residues S179 to R181 lie on the Cytoplasmic side of the membrane. A helical transmembrane segment spans residues W182–C210. Residues K211 to D230 are Extracellular-facing. Residues I231–N252 form a helical membrane-spanning segment. Position 246 (G246) interacts with L-leucine. Topologically, residues Y253–L265 are cytoplasmic. The helical transmembrane segment at P266–Y287 threads the bilayer. Over V288–G312 the chain is Extracellular. Residues V313–S338 traverse the membrane as a helical segment. At R339–P364 the chain is on the cytoplasmic side. Residues I365–S382 traverse the membrane as a helical segment. At D383–T386 the chain is on the extracellular side. Residues L387–V408 traverse the membrane as a helical segment. An L-tryptophan-binding site is contributed by N395. Residues L409 to N423 lie on the Cytoplasmic side of the membrane. Helical transmembrane passes span L424–P446 and V447–G466. Topologically, residues V467–P535 are cytoplasmic. A disordered region spans residues S502–P535. A compositionally biased stretch (polar residues) spans Q514–P523.

It belongs to the amino acid-polyamine-organocation (APC) superfamily. L-type amino acid transporter (LAT) (TC 2.A.3.8) family. As to quaternary structure, disulfide-linked heterodimer composed of the catalytic light chain subunit SLC7A8 and the heavy chain subunit SLC3A2. SLC3A2 acts as chaperones for correct plasma membrane trafficking and stabilization of SLC7A8 and modulates the substrate affinity and specificity of SLC7A8. ICAM-1 associates with the heterodimer SLC3A2/SLC7A8; this interaction regulates SLC7A8 activity. As to expression, strongest expression is observed in kidney and moderate expression in placenta and brain, followed by liver, prostate, testis, ovary, lymph node, thymus, spleen, skeletal muscle and heart. Also expressed in fetal liver as well as in the retinal pigment epithelial cell line ARPE-19 and the intestinal epithelial cell line Caco-2.

It localises to the cell membrane. Its subcellular location is the basolateral cell membrane. It carries out the reaction L-histidine(in) + L-phenylalanine(out) = L-histidine(out) + L-phenylalanine(in). It catalyses the reaction L-tryptophan(in) + L-phenylalanine(out) = L-tryptophan(out) + L-phenylalanine(in). The enzyme catalyses L-isoleucine(in) + L-phenylalanine(out) = L-isoleucine(out) + L-phenylalanine(in). The catalysed reaction is L-valine(in) + L-phenylalanine(out) = L-valine(out) + L-phenylalanine(in). It carries out the reaction L-leucine(in) + L-phenylalanine(out) = L-leucine(out) + L-phenylalanine(in). It catalyses the reaction L-glutamine(in) + L-phenylalanine(out) = L-glutamine(out) + L-phenylalanine(in). The enzyme catalyses L-cysteine(in) + L-phenylalanine(out) = L-cysteine(out) + L-phenylalanine(in). The catalysed reaction is L-phenylalanine(out) + L-methionine(in) = L-phenylalanine(in) + L-methionine(out). It carries out the reaction L-leucine(out) + L-methionine(in) = L-leucine(in) + L-methionine(out). It catalyses the reaction L-cysteine(out) + L-methionine(in) = L-cysteine(in) + L-methionine(out). The enzyme catalyses S-methylmercury-L-cysteine(out) + L-methionine(in) = S-methylmercury-L-cysteine(in) + L-methionine(out). The catalysed reaction is S-methylmercury-L-cysteine(in) + L-leucine(out) = S-methylmercury-L-cysteine(out) + L-leucine(in). It carries out the reaction S-methylmercury-L-cysteine(in) + L-phenylalanine(out) = S-methylmercury-L-cysteine(out) + L-phenylalanine(in). It catalyses the reaction L-phenylalanine(out) + L-serine(in) = L-phenylalanine(in) + L-serine(out). The enzyme catalyses L-phenylalanine(out) + glycine(in) = L-phenylalanine(in) + glycine(out). The catalysed reaction is L-phenylalanine(out) + L-alanine(in) = L-phenylalanine(in) + L-alanine(out). It carries out the reaction 3,3'-diiodo-L-thyronine(out) = 3,3'-diiodo-L-thyronine(in). It catalyses the reaction 3,3',5-triiodo-L-thyronine(out) = 3,3',5-triiodo-L-thyronine(in). The enzyme catalyses L-dopa(out) + L-phenylalanine(in) = L-dopa(in) + L-phenylalanine(out). Its activity is regulated as follows. Inhibited by the L-type inhibitor 2-Aminobicyclo-(2,2,1)-heptane-2-carboxylic acid (BCH). Associates with SLC3A2 to form a functional heterodimeric complex that translocates small and large neutral amino acids with broad specificity and a stoichiometry of 1:1. Functions as amino acid antiporter mediating the influx of extracellular essential amino acids mainly in exchange with the efflux of highly concentrated intracellular amino acids. Has relatively symmetrical selectivities but strongly asymmetrical substrate affinities at both the intracellular and extracellular sides of the transporter. This asymmetry allows SLC7A8 to regulate intracellular amino acid pools (mM concentrations) by exchange with external amino acids (uM concentration range), equilibrating the relative concentrations of different amino acids across the plasma membrane instead of mediating their net uptake. May play an essential role in the reabsorption of neutral amino acids from the epithelial cells to the bloodstream in the kidney. Involved in the uptake of methylmercury (MeHg) when administered as the L-cysteine or D,L-homocysteine complexes, and hence plays a role in metal ion homeostasis and toxicity. Involved in the cellular activity of small molecular weight nitrosothiols, via the stereoselective transport of L-nitrosocysteine (L-CNSO) across the transmembrane. Imports the thyroid hormone diiodothyronine (T2) and to a smaller extent triiodothyronine (T3) but not rT 3 or thyroxine (T4). Mediates the uptake of L-DOPA. May participate in auditory function. The sequence is that of Large neutral amino acids transporter small subunit 2 from Homo sapiens (Human).